We begin with the raw amino-acid sequence, 95 residues long: Glutamyl-tRNA(Gln) amidotransferase subunit C (95 aa).

Belongs to the GatC family. As to quaternary structure, heterotrimer of A, B and C subunits.

It carries out the reaction L-glutamyl-tRNA(Gln) + L-glutamine + ATP + H2O = L-glutaminyl-tRNA(Gln) + L-glutamate + ADP + phosphate + H(+). The catalysed reaction is L-aspartyl-tRNA(Asn) + L-glutamine + ATP + H2O = L-asparaginyl-tRNA(Asn) + L-glutamate + ADP + phosphate + 2 H(+). In terms of biological role, allows the formation of correctly charged Asn-tRNA(Asn) or Gln-tRNA(Gln) through the transamidation of misacylated Asp-tRNA(Asn) or Glu-tRNA(Gln) in organisms which lack either or both of asparaginyl-tRNA or glutaminyl-tRNA synthetases. The reaction takes place in the presence of glutamine and ATP through an activated phospho-Asp-tRNA(Asn) or phospho-Glu-tRNA(Gln). The protein is Glutamyl-tRNA(Gln) amidotransferase subunit C of Caulobacter vibrioides (strain ATCC 19089 / CIP 103742 / CB 15) (Caulobacter crescentus).